An 80-amino-acid chain; its full sequence is Mitotic-spindle organizing protein 1 (80 aa).

It belongs to the MOZART1 family. In terms of assembly, part of the gamma-tubulin complex.

It localises to the cytoplasm. The protein localises to the cytoskeleton. Its subcellular location is the microtubule organizing center. It is found in the spindle pole body. Functionally, required for gamma-tubulin complex recruitment to the microtubule organizing center (MTOC). This Pyricularia oryzae (strain 70-15 / ATCC MYA-4617 / FGSC 8958) (Rice blast fungus) protein is Mitotic-spindle organizing protein 1.